The primary structure comprises 96 residues: Protein RnfH (96 aa).

Belongs to the UPF0125 (RnfH) family.

In Salmonella agona (strain SL483), this protein is Protein RnfH.